We begin with the raw amino-acid sequence, 134 residues long: Small ribosomal subunit protein bS6 (134 aa).

Positions 113-122 (NKDIKEKEQP) are enriched in basic and acidic residues. The tract at residues 113-134 (NKDIKEKEQPSESNVDADLKVN) is disordered.

It belongs to the bacterial ribosomal protein bS6 family.

Binds together with bS18 to 16S ribosomal RNA. The protein is Small ribosomal subunit protein bS6 of Borrelia recurrentis (strain A1).